A 430-amino-acid chain; its full sequence is Dihydrofolate synthase/folylpolyglutamate synthase (430 aa).

51–54 (GKGS) provides a ligand contact to ATP. Mg(2+) is bound at residue S75. 114-117 (TEYG) provides a ligand contact to 7,8-dihydropteroate. Mg(2+) is bound at residue E145. 152 to 154 (FDS) contacts 7,8-dihydropteroate. Mg(2+) is bound at residue H172. ATP contacts are provided by Q263, R302, and D315.

Belongs to the folylpolyglutamate synthase family. In terms of assembly, monomer. Requires Mg(2+) as cofactor.

It catalyses the reaction 7,8-dihydropteroate + L-glutamate + ATP = 7,8-dihydrofolate + ADP + phosphate + H(+). The enzyme catalyses (6S)-5,6,7,8-tetrahydrofolyl-(gamma-L-Glu)(n) + L-glutamate + ATP = (6S)-5,6,7,8-tetrahydrofolyl-(gamma-L-Glu)(n+1) + ADP + phosphate + H(+). The protein operates within cofactor biosynthesis; tetrahydrofolate biosynthesis; 7,8-dihydrofolate from 2-amino-4-hydroxy-6-hydroxymethyl-7,8-dihydropteridine diphosphate and 4-aminobenzoate: step 2/2. It functions in the pathway cofactor biosynthesis; tetrahydrofolylpolyglutamate biosynthesis. In terms of biological role, functions in two distinct reactions of the de novo folate biosynthetic pathway. Catalyzes the addition of a glutamate residue to dihydropteroate (7,8-dihydropteroate or H2Pte) to form dihydrofolate (7,8-dihydrofolate monoglutamate or H2Pte-Glu). Also catalyzes successive additions of L-glutamate to tetrahydrofolate, leading to folylpolyglutamate derivatives. This Bacillus subtilis (strain 168) protein is Dihydrofolate synthase/folylpolyglutamate synthase (folC).